The following is a 336-amino-acid chain: USG-1 protein homolog (336 aa).

This sequence belongs to the aspartate-semialdehyde dehydrogenase family.

This is USG-1 protein homolog (usg) from Pseudomonas aeruginosa (strain ATCC 15692 / DSM 22644 / CIP 104116 / JCM 14847 / LMG 12228 / 1C / PRS 101 / PAO1).